A 368-amino-acid polypeptide reads, in one-letter code: Probable dual-specificity RNA methyltransferase RlmN (368 aa).

Glutamate 111 acts as the Proton acceptor in catalysis. A Radical SAM core domain is found at 117–355 (YPNRATLCIS…CTVRDTRGQE (239 aa)). A disulfide bond links cysteine 124 and cysteine 360. [4Fe-4S] cluster-binding residues include cysteine 131, cysteine 135, and cysteine 138. Residues 181-182 (GE), serine 215, 238-240 (SLH), and asparagine 317 each bind S-adenosyl-L-methionine. The active-site S-methylcysteine intermediate is the cysteine 360.

The protein belongs to the radical SAM superfamily. RlmN family. It depends on [4Fe-4S] cluster as a cofactor.

The protein localises to the cytoplasm. It catalyses the reaction adenosine(2503) in 23S rRNA + 2 reduced [2Fe-2S]-[ferredoxin] + 2 S-adenosyl-L-methionine = 2-methyladenosine(2503) in 23S rRNA + 5'-deoxyadenosine + L-methionine + 2 oxidized [2Fe-2S]-[ferredoxin] + S-adenosyl-L-homocysteine. The catalysed reaction is adenosine(37) in tRNA + 2 reduced [2Fe-2S]-[ferredoxin] + 2 S-adenosyl-L-methionine = 2-methyladenosine(37) in tRNA + 5'-deoxyadenosine + L-methionine + 2 oxidized [2Fe-2S]-[ferredoxin] + S-adenosyl-L-homocysteine. Specifically methylates position 2 of adenine 2503 in 23S rRNA and position 2 of adenine 37 in tRNAs. This chain is Probable dual-specificity RNA methyltransferase RlmN, found in Corynebacterium diphtheriae (strain ATCC 700971 / NCTC 13129 / Biotype gravis).